The primary structure comprises 166 residues: Endoribonuclease YbeY (166 aa).

Zn(2+) is bound by residues H132, H136, and H142.

Belongs to the endoribonuclease YbeY family. It depends on Zn(2+) as a cofactor.

It is found in the cytoplasm. Its function is as follows. Single strand-specific metallo-endoribonuclease involved in late-stage 70S ribosome quality control and in maturation of the 3' terminus of the 16S rRNA. In Clostridium botulinum (strain Kyoto / Type A2), this protein is Endoribonuclease YbeY.